Here is a 475-residue protein sequence, read N- to C-terminus: Ribosomal RNA small subunit methyltransferase F (475 aa).

Residues 125 to 131, Glu149, Asp176, and Asp194 contribute to the S-adenosyl-L-methionine site; that span reads AAAPGSK. Cys247 (nucleophile) is an active-site residue.

The protein belongs to the class I-like SAM-binding methyltransferase superfamily. RsmB/NOP family.

It is found in the cytoplasm. The catalysed reaction is cytidine(1407) in 16S rRNA + S-adenosyl-L-methionine = 5-methylcytidine(1407) in 16S rRNA + S-adenosyl-L-homocysteine + H(+). In terms of biological role, specifically methylates the cytosine at position 1407 (m5C1407) of 16S rRNA. This chain is Ribosomal RNA small subunit methyltransferase F, found in Aeromonas hydrophila subsp. hydrophila (strain ATCC 7966 / DSM 30187 / BCRC 13018 / CCUG 14551 / JCM 1027 / KCTC 2358 / NCIMB 9240 / NCTC 8049).